The following is a 325-amino-acid chain: 5-dehydro-2-deoxygluconokinase (325 aa).

The protein belongs to the carbohydrate kinase PfkB family.

It catalyses the reaction 5-dehydro-2-deoxy-D-gluconate + ATP = 6-phospho-5-dehydro-2-deoxy-D-gluconate + ADP + H(+). It participates in polyol metabolism; myo-inositol degradation into acetyl-CoA; acetyl-CoA from myo-inositol: step 5/7. Its function is as follows. Catalyzes the phosphorylation of 5-dehydro-2-deoxy-D-gluconate (2-deoxy-5-keto-D-gluconate or DKG) to 6-phospho-5-dehydro-2-deoxy-D-gluconate (DKGP). The chain is 5-dehydro-2-deoxygluconokinase from Listeria monocytogenes serotype 4a (strain HCC23).